We begin with the raw amino-acid sequence, 2096 residues long: HEAT repeat-containing protein 1 homolog (2096 aa).

An HEAT repeat occupies 2058-2096 (TVPFIAELLEDEHQRVEKNTRTGVQELETILGESVQKYL).

This sequence belongs to the HEATR1/UTP10 family. As to quaternary structure, part of the small subunit (SSU) processome, composed of more than 70 proteins and the RNA chaperone small nucleolar RNA (snoRNA) U3. Interacts with MYC; the interaction is required for localization of MYC to the nucleolus.

It is found in the nucleus. The protein localises to the nucleolus. Functionally, ribosome biogenesis factor; required for recruitment of Myc to nucleoli. Involved in nucleolar processing of pre-18S ribosomal RNA. Required for optimal pre-ribosomal RNA transcription by RNA polymerase I. Part of the small subunit (SSU) processome, first precursor of the small eukaryotic ribosomal subunit. During the assembly of the SSU processome in the nucleolus, many ribosome biogenesis factors, an RNA chaperone and ribosomal proteins associate with the nascent pre-rRNA and work in concert to generate RNA folding, modifications, rearrangements and cleavage as well as targeted degradation of pre-ribosomal RNA by the RNA exosome. Involved in neuronal-lineage cell proliferation during larval development. The chain is HEAT repeat-containing protein 1 homolog from Drosophila melanogaster (Fruit fly).